The sequence spans 647 residues: Starch synthase 1, chloroplastic/amyloplastic (647 aa).

The N-terminal 41 residues, 1-41, are a transit peptide targeting the chloroplast; that stretch reads MAATGVGAGCLAPSVRLRADPATAARASACVVRARLRRVAR. The segment covering 66–91 has biased composition (pro residues); the sequence is PLVPGFLAPPPPAPAQSPAPTQPPLP. The disordered stretch occupies residues 66 to 95; that stretch reads PLVPGFLAPPPPAPAQSPAPTQPPLPDAGV. K153 provides a ligand contact to ADP-alpha-D-glucose.

Belongs to the glycosyltransferase 1 family. Bacterial/plant glycogen synthase subfamily.

It is found in the plastid. It localises to the chloroplast. Its subcellular location is the amyloplast. It carries out the reaction [(1-&gt;4)-alpha-D-glucosyl](n) + ADP-alpha-D-glucose = [(1-&gt;4)-alpha-D-glucosyl](n+1) + ADP + H(+). It functions in the pathway glycan biosynthesis; starch biosynthesis. The chain is Starch synthase 1, chloroplastic/amyloplastic (WSSI-2) from Triticum aestivum (Wheat).